The chain runs to 350 residues: MNTLMKIQLVRPVFRITLRNYGKPERFMWCQKEYARAPKVVCLDGNEIPVIGLGTFNSPKGQVTEAVKVAIDAGYRHIDCAYVYQNEDEVGDGVEAKIKEGVVKREDLFITSKLWNTFHRPDLVKSALENTLSSLKLKYLDLYLIHWPMGYKEGCDLFPTDKDGKTLYSPVDYVDTWKAMEKLVEEGLVKSIGVSNFNRRQIERVLEVATIPPVTNQIECHPYLTQKKLIDFCKSKDITITAYSPLGSPNRPWAKAGDPVILEEAKIKEIAAKKKKTPGQILIRYQVQRANIVIPKSVTKDRIESNFQVFDFELTPEEIEIIESFECNGRLVPLLNQYGHPHHPFEKDEY.

Catalysis depends on Tyr-84, which acts as the Proton donor. His-146 is a binding site for substrate. NADP(+) is bound at residue Ser-244–Asn-306.

This sequence belongs to the aldo/keto reductase family.

It localises to the cytoplasm. The catalysed reaction is an alditol + NADP(+) = an aldose + NADPH + H(+). It catalyses the reaction all-trans-retinol + NADP(+) = all-trans-retinal + NADPH + H(+). It carries out the reaction 9-cis-retinol + NADP(+) = 9-cis-retinal + NADPH + H(+). The enzyme catalyses 13-cis-retinol + NADP(+) = 13-cis-retinal + NADPH + H(+). The catalysed reaction is glycerol + NADP(+) = D-glyceraldehyde + NADPH + H(+). It catalyses the reaction glycerol + NADP(+) = L-glyceraldehyde + NADPH + H(+). It carries out the reaction prenol + NADP(+) = 3-methyl-2-butenal + NADPH + H(+). The enzyme catalyses (E)-hex-2-en-1-ol + NADP(+) = (E)-hex-2-enal + NADPH + H(+). The catalysed reaction is (E,E)-2,4-hexadien-1-ol + NADP(+) = (E,E)-2,4-hexadienal + NADPH + H(+). It catalyses the reaction a 4-hydroxynonen-1-ol + NADP(+) = a 4-hydroxynonenal + NADPH + H(+). It carries out the reaction prostaglandin F2alpha + NADP(+) = prostaglandin H2 + NADPH + H(+). The enzyme catalyses allyl alcohol + NADP(+) = acrolein + NADPH + H(+). The catalysed reaction is pyridine 3-methanol + NADP(+) = pyridine-3-carbaldehyde + NADPH + H(+). It catalyses the reaction 1-hexadecanoyl-2-(5-oxopentanoyl)-sn-glycero-3-phosphocholine + NADPH + H(+) = 1-hexadecanoyl-2-(5-hydroxypentanoyl)-sn-glycero-3-phosphocholine + NADP(+). It carries out the reaction 1-hexadecanoyl-2-(7-oxoheptanoyl)-sn-glycero-3-phosphocholine + NADPH + H(+) = 1-hexadecanoyl-2-(7-hydroxyheptanoyl)-sn-glycero-3-phosphocholine + NADP(+). The enzyme catalyses 1-hexadecanoyl-2-(9-oxononanoyl)-sn-glycero-3-phosphocholine + NADPH + H(+) = 1-hexadecanoyl-2-(9-hydroxynonanoyl)-sn-glycero-3-phosphocholine + NADP(+). The catalysed reaction is 1-hexadecanoyl-2-(5-oxopentanoyl)-sn-glycero-3-phosphoethanolamine + NADPH + H(+) = 1-hexadecanoyl-2-(5-hydroxypentanoyl)-sn-glycero-3-phosphoethanolamine + NADP(+). Its function is as follows. Catalyzes the NADPH-dependent reduction of a wide variety of carbonyl-containing compounds to their corresponding alcohols. Displays enzymatic activity towards endogenous metabolites such as aromatic and aliphatic aldehydes, ketones, monosaccharides, bile acids and xenobiotics substrates. Key enzyme in the polyol pathway, catalyzes reduction of glucose to sorbitol during hyperglycemia. Reduces steroids and their derivatives and prostaglandins. Through production of prostaglandin F2alpha may regulate the activity of non-muscle myosin II in an autocrine or paracrine fashion; influences border cell and nurse cell stiffness to facilitate border cell cluster migration. Also regulates the cell surface localization of integrins in an autocrine or paracrine fashion; influences border cell adhesion to maintain border cell cluster morphology. In hemocytes, probably contributes to production of sugar alcohols in the hemolymph, which act as alarmins involved in gut-fat body innate immunological communication (GFIC); leads to activation of the imd/Relish signaling pathway in the fat body. The protein is Aldo-keto reductase 1B of Drosophila melanogaster (Fruit fly).